The following is a 97-amino-acid chain: Aspartyl/glutamyl-tRNA(Asn/Gln) amidotransferase subunit C (97 aa).

This sequence belongs to the GatC family. In terms of assembly, heterotrimer of A, B and C subunits.

The catalysed reaction is L-glutamyl-tRNA(Gln) + L-glutamine + ATP + H2O = L-glutaminyl-tRNA(Gln) + L-glutamate + ADP + phosphate + H(+). It catalyses the reaction L-aspartyl-tRNA(Asn) + L-glutamine + ATP + H2O = L-asparaginyl-tRNA(Asn) + L-glutamate + ADP + phosphate + 2 H(+). In terms of biological role, allows the formation of correctly charged Asn-tRNA(Asn) or Gln-tRNA(Gln) through the transamidation of misacylated Asp-tRNA(Asn) or Glu-tRNA(Gln) in organisms which lack either or both of asparaginyl-tRNA or glutaminyl-tRNA synthetases. The reaction takes place in the presence of glutamine and ATP through an activated phospho-Asp-tRNA(Asn) or phospho-Glu-tRNA(Gln). This Prochlorococcus marinus (strain AS9601) protein is Aspartyl/glutamyl-tRNA(Asn/Gln) amidotransferase subunit C.